The following is a 179-amino-acid chain: MSSFRWVRPLQLTLALIKPDAVANPVISEAVHQKILENNFLIIRHKELHWRSTDSQRFYCEHKGRFFYQRLVEFMSSGPMQAYILAHEDAVQLWRNLMGPTKVFRARIVAPGTVRGDLGLTDTRNTTHGSDSVESACREITFFFPEFNTSDWYEKQEPRYRTGPVFYDEERSEHRLEGE.

The ATP site is built by Lys18, Phe67, Arg95, Thr101, Arg115, and Asn125. Catalysis depends on His128, which acts as the Pros-phosphohistidine intermediate.

Belongs to the NDK family. Mg(2+) serves as cofactor.

It carries out the reaction a 2'-deoxyribonucleoside 5'-diphosphate + ATP = a 2'-deoxyribonucleoside 5'-triphosphate + ADP. It catalyses the reaction a ribonucleoside 5'-diphosphate + ATP = a ribonucleoside 5'-triphosphate + ADP. Its function is as follows. Major role in the synthesis of nucleoside triphosphates other than ATP. The ATP gamma phosphate is transferred to the NDP beta phosphate via a ping-pong mechanism, using a phosphorylated active-site intermediate. The protein is Nucleoside diphosphate kinase 6 (nme6) of Xenopus tropicalis (Western clawed frog).